The primary structure comprises 254 residues: Alcohol dehydrogenase (254 aa).

Position 10 to 33 (10 to 33) interacts with NAD(+); it reads FVAGLGGIGLDTSREIVKSGPKNL. S138 is a substrate binding site. Catalysis depends on Y151, which acts as the Proton acceptor.

This sequence belongs to the short-chain dehydrogenases/reductases (SDR) family. Homodimer.

The enzyme catalyses a primary alcohol + NAD(+) = an aldehyde + NADH + H(+). The catalysed reaction is a secondary alcohol + NAD(+) = a ketone + NADH + H(+). In Drosophila borealis (Fruit fly), this protein is Alcohol dehydrogenase (Adh).